Reading from the N-terminus, the 878-residue chain is Protein translocase subunit SecA (878 aa).

ATP contacts are provided by residues Gln-79, 97–101 (GEGKT), and Asp-487.

The protein belongs to the SecA family.

It is found in the plastid. The protein localises to the chloroplast stroma. Its subcellular location is the chloroplast thylakoid membrane. The enzyme catalyses ATP + H2O + cellular proteinSide 1 = ADP + phosphate + cellular proteinSide 2.. Has a central role in coupling the hydrolysis of ATP to the transfer of proteins across the thylakoid membrane. This is Protein translocase subunit SecA from Antithamnion sp. (Red alga).